Reading from the N-terminus, the 73-residue chain is MAKKDGAIEIEGTVIESLPNAMFRVELDNGHKVLAHISGKMRMHYIRILPDDRVVVELSPYDLTRGRIVYRYK.

The region spanning 1–73 (MAKKDGAIEI…TRGRIVYRYK (73 aa)) is the S1-like domain.

The protein belongs to the IF-1 family. Component of the 30S ribosomal translation pre-initiation complex which assembles on the 30S ribosome in the order IF-2 and IF-3, IF-1 and N-formylmethionyl-tRNA(fMet); mRNA recruitment can occur at any time during PIC assembly.

It localises to the cytoplasm. One of the essential components for the initiation of protein synthesis. Stabilizes the binding of IF-2 and IF-3 on the 30S subunit to which N-formylmethionyl-tRNA(fMet) subsequently binds. Helps modulate mRNA selection, yielding the 30S pre-initiation complex (PIC). Upon addition of the 50S ribosomal subunit IF-1, IF-2 and IF-3 are released leaving the mature 70S translation initiation complex. The polypeptide is Translation initiation factor IF-1 (Thermobifida fusca (strain YX)).